A 475-amino-acid chain; its full sequence is Sulfate adenylyltransferase subunit 1 (475 aa).

The tr-type G domain maps to 25-239 (KSLLRFLTCG…EVLETVEIQR (215 aa)). A G1 region spans residues 34–41 (GSVDDGKS). Residue 34–41 (GSVDDGKS) coordinates GTP. Residues 92 to 96 (GITID) are G2. A G3 region spans residues 113–116 (DTPG). GTP-binding positions include 113 to 117 (DTPGH) and 168 to 171 (NKMD). A G4 region spans residues 168–171 (NKMD). Residues 206–208 (SAL) form a G5 region.

This sequence belongs to the TRAFAC class translation factor GTPase superfamily. Classic translation factor GTPase family. CysN/NodQ subfamily. In terms of assembly, heterodimer composed of CysD, the smaller subunit, and CysN.

It carries out the reaction sulfate + ATP + H(+) = adenosine 5'-phosphosulfate + diphosphate. It participates in sulfur metabolism; hydrogen sulfide biosynthesis; sulfite from sulfate: step 1/3. Its function is as follows. With CysD forms the ATP sulfurylase (ATPS) that catalyzes the adenylation of sulfate producing adenosine 5'-phosphosulfate (APS) and diphosphate, the first enzymatic step in sulfur assimilation pathway. APS synthesis involves the formation of a high-energy phosphoric-sulfuric acid anhydride bond driven by GTP hydrolysis by CysN coupled to ATP hydrolysis by CysD. This is Sulfate adenylyltransferase subunit 1 from Escherichia coli O139:H28 (strain E24377A / ETEC).